The primary structure comprises 736 residues: Gephyrin (736 aa).

Residues 14-153 (QIRVGVLTVS…LPGSKKGSQE (140 aa)) form an MPT Mo-transferase region. Disordered stretches follow at residues 181–232 (DELE…DSSS) and 260–290 (TASL…PKVQ). Pro residues predominate over residues 187-199 (PSPPPPLSPPPTT). A compositionally biased stretch (polar residues) spans 261-290 (ASLSTTPSESPRAQATSRLSTASCPTPKVQ). Residues 294-736 (SSKENILRAS…VVDVMVIGRL (443 aa)) form an MPT adenylyltransferase region.

The protein in the N-terminal section; belongs to the MoaB/Mog family. It in the C-terminal section; belongs to the MoeA family. In terms of assembly, homotrimer, homodimer and homooligomer. Interacts with glycine receptors. It depends on Mg(2+) as a cofactor.

It is found in the postsynaptic cell membrane. The protein resides in the cell membrane. It localises to the cytoplasm. The protein localises to the cytosol. Its subcellular location is the cytoskeleton. It is found in the cell projection. The protein resides in the dendrite. It localises to the postsynaptic density. The enzyme catalyses molybdopterin + ATP + H(+) = adenylyl-molybdopterin + diphosphate. The catalysed reaction is adenylyl-molybdopterin + molybdate = Mo-molybdopterin + AMP + H(+). It functions in the pathway cofactor biosynthesis; molybdopterin biosynthesis. Its function is as follows. Microtubule-associated protein involved in membrane protein-cytoskeleton interactions. It is thought to anchor the inhibitory glycine receptor (GLYR) to subsynaptic microtubules. Acts as a major instructive molecule at inhibitory synapses, where it also clusters GABA type A receptors. In terms of biological role, also has a catalytic activity and catalyzes two steps in the biosynthesis of the molybdenum cofactor. In the first step, molybdopterin is adenylated. Subsequently, molybdate is inserted into adenylated molybdopterin and AMP is released. The sequence is that of Gephyrin (GPHN) from Gallus gallus (Chicken).